A 430-amino-acid chain; its full sequence is Asparagine--tRNA ligase (430 aa).

The protein belongs to the class-II aminoacyl-tRNA synthetase family. As to quaternary structure, homodimer.

Its subcellular location is the cytoplasm. It carries out the reaction tRNA(Asn) + L-asparagine + ATP = L-asparaginyl-tRNA(Asn) + AMP + diphosphate + H(+). This Staphylococcus aureus (strain bovine RF122 / ET3-1) protein is Asparagine--tRNA ligase.